The primary structure comprises 443 residues: MKIGIINTKIRTVFSAFACMIAASLVCTMPARAVVEININKGVIEPLPIAITDFLSADQLGPNITSVIAADLERSGLFAPIDKGAFIEKISNPDAAPRFEDWKVINAQALVTGRITKQPDGRLKAEFRLWDTFGGQQMIGQQFFTTPDNWRRVAHIIADAIYERLTGEKGYFDTRVVFVDESGPAQKRVKRLAIMDQDGANVRYISDGRAISLTPRFSPNRQEVTYMSFEGGSPKVYLLQLETGQRELVGNFPGMTIAPRFSPDGQKVVMSLLQDDGSANIYTMDLRNRSTTRLTNSQAIDTSASYSPDGSQIVFSSDRGGRPQLYVMGADGSNPRRISAGDGSYSTPVWSPRGDLIAFTKQSQGQFSIGVMKTDGSGERLLTSGFHNEGPTWAPNGRVLMFFRKAAGAGGPKLFTIDLTGRNERQIQTPNFASDPAWSPLLE.

A signal peptide spans 1-33; that stretch reads MKIGIINTKIRTVFSAFACMIAASLVCTMPARA.

It belongs to the TolB family. The Tol-Pal system is composed of five core proteins: the inner membrane proteins TolA, TolQ and TolR, the periplasmic protein TolB and the outer membrane protein Pal. They form a network linking the inner and outer membranes and the peptidoglycan layer.

Its subcellular location is the periplasm. In terms of biological role, part of the Tol-Pal system, which plays a role in outer membrane invagination during cell division and is important for maintaining outer membrane integrity. In Brucella anthropi (strain ATCC 49188 / DSM 6882 / CCUG 24695 / JCM 21032 / LMG 3331 / NBRC 15819 / NCTC 12168 / Alc 37) (Ochrobactrum anthropi), this protein is Tol-Pal system protein TolB.